The chain runs to 453 residues: Bestrophin homolog 5 (453 aa).

Transmembrane regions (helical) follow at residues 78–98 (ELIVWICAYSLVSVIYRFALT), 113–133 (DARMGYLPLNFVLGFFCNIII), 275–295 (IPLMYPQLVNMAVHTYFFLCI), and 314–334 (LYIPFMTIIEFIFYMGWLKVA).

The protein belongs to the anion channel-forming bestrophin (TC 1.A.46) family. Calcium-sensitive chloride channel subfamily. Forms oligomers.

Its subcellular location is the cell membrane. In terms of biological role, forms chloride channels. This Caenorhabditis elegans protein is Bestrophin homolog 5 (best-5).